Reading from the N-terminus, the 197-residue chain is Casparian strip membrane protein 4 (197 aa).

The Cytoplasmic segment spans residues 1-34 (MMSSTTIDVPAESSNVAKGKAVLVAAPRPGGWKK). Residues 35-55 (GIAIVDFVLRLGAVAAALGAA) traverse the membrane as a helical segment. Residues 56-85 (TTMATADQTLPFFTQFFQFEASYDSFTTFQ) are Extracellular-facing. The helical transmembrane segment at 86–106 (FFVITMALVGCYLVLSLPLSI) threads the bilayer. The Cytoplasmic segment spans residues 107–118 (VSIIRPHALGPK). Residues 119–139 (LFLIILDTVFLTLATASAASA) traverse the membrane as a helical segment. The Extracellular segment spans residues 140 to 171 (AAVVYVAHNGNQDSNWLAICNQFGDFCAQTSG). Residues 172-192 (AVVSSLVAVVVFVLLIVMSAL) traverse the membrane as a helical segment. At 193 to 197 (ALGKH) the chain is on the cytoplasmic side.

It belongs to the Casparian strip membrane proteins (CASP) family. Homodimer and heterodimers.

It localises to the cell membrane. In terms of biological role, regulates membrane-cell wall junctions and localized cell wall deposition. Required for establishment of the Casparian strip membrane domain (CSD) and the subsequent formation of Casparian strips, a cell wall modification of the root endodermis that determines an apoplastic barrier between the intraorganismal apoplasm and the extraorganismal apoplasm and prevents lateral diffusion. This Lotus japonicus (Lotus corniculatus var. japonicus) protein is Casparian strip membrane protein 4.